We begin with the raw amino-acid sequence, 205 residues long: Mitotic spindle assembly checkpoint protein MAD2A (205 aa).

Alanine 2 carries the N-acetylalanine modification. Residues 14–197 (RGSAEIVAEF…TTIHKVNSMV (184 aa)) form the HORMA domain. Phosphoserine occurs at positions 130, 170, 185, and 195. The interval 195-205 (SMVAYKTPVND) is required for assuming the closed conformation and for interaction with CDC20.

The protein belongs to the MAD2 family. In terms of assembly, monomer and homodimer. Heterodimerizes with MAD2L1 in order to form a tetrameric MAD1L1-MAD2L1 core complex. In the closed and open conformation, interacts with MAD1L1. Formation of a heterotetrameric core complex containing two molecules each of MAD1L1 and of MAD2L1 promotes binding of another molecule of MAD2L1 to each MAD2L1, resulting in a heterohexamer. Interacts with MAD2L1BP. Interacts with ADAM17/TACE. Interacts with CDC20. Dimeric MAD2L1 in the closed conformation interacts with CDC20. Monomeric MAD2L1 in the open conformation does not interact with CDC20. CDC20 competes with MAD1L1 for MAD2L1 binding. In the closed conformation, interacts with BUB1B. Interacts with TTK. Interacts with TPR. Binds to UBD (via ubiquitin-like 1 domain) during mitosis. Interacts with isoform 1 and isoform 2 of NEK2. Interacts with HSF1; this interaction occurs in mitosis. Phosphorylated on multiple serine residues. The level of phosphorylation varies during the cell cycle and is highest during mitosis. Phosphorylation abolishes interaction with MAD1L1 and reduces interaction with CDC20. Phosphorylated by NEK2.

The protein resides in the nucleus. The protein localises to the chromosome. It localises to the centromere. It is found in the kinetochore. Its subcellular location is the cytoplasm. The protein resides in the cytoskeleton. The protein localises to the spindle pole. In terms of biological role, component of the spindle-assembly checkpoint that prevents the onset of anaphase until all chromosomes are properly aligned at the metaphase plate. In the closed conformation (C-MAD2) forms a heterotetrameric complex with MAD1L1 at unattached kinetochores during prometaphase, and recruits an open conformation of MAD2L1 (O-MAD2) which then promotes the conversion of O-MAD2 to C-MAD2. Required for the execution of the mitotic checkpoint which monitors the process of kinetochore-spindle attachment and inhibits the activity of the anaphase promoting complex by sequestering CDC20 until all chromosomes are aligned at the metaphase plate. This Mus musculus (Mouse) protein is Mitotic spindle assembly checkpoint protein MAD2A (Mad2l1).